Here is a 242-residue protein sequence, read N- to C-terminus: N-alpha-acetyltransferase 60 (242 aa).

Residues 1–192 (MSEEERPAAL…GGHPPWTVMD (192 aa)) are Cytoplasmic-facing. The N-acetyltransferase domain maps to 13–182 (TILRFLCHDD…DAYTYVLYLN (170 aa)). Tyrosine 38 contacts substrate. The active site involves tyrosine 97. Leucine 99 contacts substrate. Residues 101 to 103 (LGV) and 109 to 114 (KQGIGS) contribute to the acetyl-CoA site. Histidine 138 is an active-site residue. Acetyl-CoA contacts are provided by residues asparagine 143 and 150 to 153 (YENR). The tract at residues 162-173 (PYYYSIRGVLQD) is required for homodimerization. Residue tyrosine 165 participates in substrate binding. The segment at residues 193–236 (YLQHLGSALAGFSPCTLPQRIYRQAHTLLRSLLPWSSISAKSGI) is an intramembrane region (helical). The Cytoplasmic segment spans residues 237 to 242 (EYSRTM).

The protein belongs to the acetyltransferase family. NAA60 subfamily. In terms of assembly, monomer and homodimer; monomer in presence of substrate and homodimer in its absence.

It localises to the golgi apparatus membrane. It catalyses the reaction N-terminal L-methionyl-[transmembrane protein] + acetyl-CoA = N-terminal N(alpha)-acetyl-L-methionyl-[transmembrane protein] + CoA + H(+). The enzyme catalyses L-lysyl-[protein] + acetyl-CoA = N(6)-acetyl-L-lysyl-[protein] + CoA + H(+). N-alpha-acetyltransferase that specifically mediates the acetylation of N-terminal residues of the transmembrane proteins, with a strong preference for N-termini facing the cytosol. Displays N-terminal acetyltransferase activity towards a range of N-terminal sequences including those starting with Met-Lys, Met-Val, Met-Ala and Met-Met. Required for normal chromosomal segregation during anaphase. May also show histone acetyltransferase activity; such results are however unclear in vivo and would require additional experimental evidences. This is N-alpha-acetyltransferase 60 (naa60) from Xenopus tropicalis (Western clawed frog).